We begin with the raw amino-acid sequence, 131 residues long: Histone H2A-beta (131 aa).

An N-acetylserine modification is found at serine 2. N6-acetyllysine is present on residues lysine 5 and lysine 9. Glutamine 106 bears the N5-methylglutamine mark. A Phosphoserine modification is found at serine 128. The short motif at 128 to 129 (SQ) is the [ST]-Q motif element.

This sequence belongs to the histone H2A family. The nucleosome is a histone octamer containing two molecules each of H2A, H2B, H3 and H4 assembled in one H3-H4 heterotetramer and two H2A-H2B heterodimers. The octamer wraps approximately 147 bp of DNA. Post-translationally, phosphorylated to form H2AS128ph (gamma-H2A) in response to DNA double-strand breaks (DSBs) generated by exogenous genotoxic agents and by stalled replication forks. Phosphorylation is dependent on the DNA damage checkpoint kinases rad3/ATR and tel1/ATM, spreads on either side of a detected DSB site and may mark the surrounding chromatin for recruitment of proteins required for DNA damage signaling and repair. Gamma-H2A is required for recruiting crb2, a modulator of DNA damage checkpoint signaling, to DSB sites. Gamma-H2A is removed from the DNA prior to the strand invasion-primer extension step of the repair process and subsequently dephosphorylated. Dephosphorylation is necessary for efficient recovery from the DNA damage checkpoint. In terms of processing, acetylated by esa1 to form H2AK4ac and H2AK7ac.

It localises to the nucleus. The protein localises to the chromosome. Functionally, core component of nucleosome which plays a central role in DNA double strand break (DSB) repair. Nucleosomes wrap and compact DNA into chromatin, limiting DNA accessibility to the cellular machineries which require DNA as a template. Histones thereby play a central role in transcription regulation, DNA repair, DNA replication and chromosomal stability. DNA accessibility is regulated via a complex set of post-translational modifications of histones, also called histone code, and nucleosome remodeling. This chain is Histone H2A-beta (hta2), found in Schizosaccharomyces pombe (strain 972 / ATCC 24843) (Fission yeast).